Here is a 24-residue protein sequence, read N- to C-terminus: Lantibiotic 107891 (24 aa).

(E)-2,3-didehydrobutyrine is present on threonine 2. A cross-link (lanthionine (Ser-Cys)) is located at residues 3–7 (SWSLC). A 6'-chlorotryptophan modification is found at tryptophan 4. Serine 5 is modified (2,3-didehydroalanine (Ser)). A cross-link (beta-methyllanthionine (Thr-Cys)) is located at residues 8–11 (TPGC). 2 cross-links (lanthionine (Ser-Cys)) span residues 13–20 (SPGGGSNC) and 18–23 (SNCSFC). Proline 14 carries the 3,4-dihydroxyproline; in form A1 modification. Position 14 is a 4-hydroxyproline; in form A2 (proline 14). The segment at residues 21–24 (SFCC) is a cross-link (S-(2-aminovinyl)-D-cysteine (Ser-Cys)).

The protein belongs to the type A lantibiotic family. In terms of processing, maturation of lantibiotics involves the enzymatic conversion of Thr, and Ser into dehydrated AA and the formation of thioether bonds with cysteine. The C-terminal lanthionine undergoes decarboxylation. This is followed by membrane translocation and cleavage of the modified precursor. Post-translationally, occurs in 2 forms, A1 contains 3,4-dihydroxyproline at Pro-14, A2 contains 4-hydroxyproline at Pro-14. The patent report does not provide the stereochemistry of the modified prolines. The patent report does not describe whether the 2,3-didehydrobutyrine is the E- or Z-isomer. In several diagrams it is shown as the E-isomer.

In terms of biological role, lanthionine-containing peptide antibiotic (lantibiotic) active on Gram-positive bacteria. The bactericidal activity of lantibiotics is based on depolarization of energized bacterial cytoplasmic membranes, initiated by the formation of aqueous transmembrane pores. The polypeptide is Lantibiotic 107891 (Microbispora sp. (strain 107891)).